The chain runs to 329 residues: (12E)-labda-8(17),12,14-triene synthase (329 aa).

Mg(2+) is bound by residues aspartate 90 and glutamate 95. The DDXXXE motif signature appears at 90 to 95 (DDMHGE). Arginine 184 lines the substrate pocket. Mg(2+) contacts are provided by asparagine 230 and serine 234. Residues 230–238 (NDLASYERE) carry the NXXXSXXXE motif motif. Position 237 (arginine 237) interacts with substrate. Glutamate 238 contributes to the Mg(2+) binding site. 316–317 (RY) contributes to the substrate binding site.

Belongs to the terpene synthase family. Mg(2+) serves as cofactor.

It catalyses the reaction (+)-copalyl diphosphate = (12E)-labda-8(17),12,14-triene + diphosphate. Its function is as follows. Involved in the biosynthesis of the mercapturic acid derivative diterpene cyslabdan A, a potentiator of the beta-lactam antibiotic imipenem. Catalyzes the conversion of (+)-copalyl diphosphate to yield labda-8(17),12(E),14-triene (biformene). In Streptomyces cyslabdanicus, this protein is (12E)-labda-8(17),12,14-triene synthase.